The primary structure comprises 59 residues: Large ribosomal subunit protein uL30 (59 aa).

This sequence belongs to the universal ribosomal protein uL30 family. Part of the 50S ribosomal subunit.

This chain is Large ribosomal subunit protein uL30, found in Staphylococcus epidermidis (strain ATCC 12228 / FDA PCI 1200).